Reading from the N-terminus, the 64-residue chain is Beta-defensin 1 (64 aa).

The first 20 residues, 1–20 (MRLHRLLLVFLLMVLLPVPG), serve as a signal peptide directing secretion. Positions 21–23 (LLK) are excised as a propeptide. Intrachain disulfides connect C31–C60, C38–C53, and C43–C61.

Belongs to the beta-defensin family. As to quaternary structure, monomer. Homodimer.

Its subcellular location is the secreted. The protein localises to the membrane. Has bactericidal activity. May act as a ligand for C-C chemokine receptor CCR6. Positively regulates the sperm motility and bactericidal activity in a CCR6-dependent manner. Binds to CCR6 and triggers Ca2+ mobilization in the sperm which is important for its motility. The protein is Beta-defensin 1 (DEFB1) of Sus scrofa (Pig).